The sequence spans 366 residues: MKMSFRWYGKKDPVTLEEIKAIPGMQGIVTAVYDVPVGQAWPLENILELKKMVEEAGLEITVIESIPVHEDIKQGKPNRDALIENYKTSIRNVGAAGIPVVCYNFMPVFDWTRSDLHHPLPDGSTSLAFLKSDLAGVDPVADDLNLPGWDSSYSKEEMKAIIENYRQNISEEDLWANLEYFIKAILPTAEEAGVKMAIHPDDPPYGIFGLPRIITGQEAVERFLNLYDSEHNGITMCVGSYASDPKNDVLAMTEYALKRNRINFMHTRNVTAGAWGFQETAHLSQAGDIDMNAVVKLLVDYDWQGSLRPDHGRRIWGDQTKTPGYGLYDRALGATYFNGLYEANMRAAGKTPDFGIKAKTVGTKEG.

Belongs to the mannonate dehydratase family. It depends on Fe(2+) as a cofactor. Mn(2+) serves as cofactor.

The catalysed reaction is D-mannonate = 2-dehydro-3-deoxy-D-gluconate + H2O. It functions in the pathway carbohydrate metabolism; pentose and glucuronate interconversion. In terms of biological role, catalyzes the dehydration of D-mannonate. The polypeptide is Mannonate dehydratase (Streptococcus suis (strain 98HAH33)).